Consider the following 213-residue polypeptide: MKAFTQHNGLVAPLDRANVDTDQIIPKQFLKSIKRTGFGPNLFDEWRYLDVGQPYQDNSKRPLNHDFVLNHERYQGASVLLARENFGCGSSREHAPWALEEYGFCAIIAPSYADIFFNNSFKNGLLPIILSEAEVDELFKQVEASPGYQLSIDLQAQTVTRPDGKVLSFEIDAFRKHCLLNGLDDIGLTLMDADAIASFESRHRASQPWLFRD.

This sequence belongs to the LeuD family. LeuD type 1 subfamily. In terms of assembly, heterodimer of LeuC and LeuD.

It catalyses the reaction (2R,3S)-3-isopropylmalate = (2S)-2-isopropylmalate. Its pathway is amino-acid biosynthesis; L-leucine biosynthesis; L-leucine from 3-methyl-2-oxobutanoate: step 2/4. Catalyzes the isomerization between 2-isopropylmalate and 3-isopropylmalate, via the formation of 2-isopropylmaleate. This Pseudomonas savastanoi pv. phaseolicola (strain 1448A / Race 6) (Pseudomonas syringae pv. phaseolicola (strain 1448A / Race 6)) protein is 3-isopropylmalate dehydratase small subunit.